Consider the following 258-residue polypeptide: Phosphoadenosine 5'-phosphosulfate reductase (258 aa).

Residue Cys244 is the Nucleophile; cysteine thiosulfonate intermediate of the active site.

The protein belongs to the PAPS reductase family. CysH subfamily.

The protein localises to the cytoplasm. The catalysed reaction is [thioredoxin]-disulfide + sulfite + adenosine 3',5'-bisphosphate + 2 H(+) = [thioredoxin]-dithiol + 3'-phosphoadenylyl sulfate. It participates in sulfur metabolism; hydrogen sulfide biosynthesis; sulfite from sulfate: step 3/3. In terms of biological role, catalyzes the formation of sulfite from phosphoadenosine 5'-phosphosulfate (PAPS) using thioredoxin as an electron donor. The chain is Phosphoadenosine 5'-phosphosulfate reductase from Vibrio atlanticus (strain LGP32) (Vibrio splendidus (strain Mel32)).